The primary structure comprises 347 residues: Protein RecA (347 aa).

64–71 (GPESSGKT) serves as a coordination point for ATP.

The protein belongs to the RecA family.

It localises to the cytoplasm. Its function is as follows. Can catalyze the hydrolysis of ATP in the presence of single-stranded DNA, the ATP-dependent uptake of single-stranded DNA by duplex DNA, and the ATP-dependent hybridization of homologous single-stranded DNAs. It interacts with LexA causing its activation and leading to its autocatalytic cleavage. The polypeptide is Protein RecA (Bartonella quintana (strain Toulouse) (Rochalimaea quintana)).